The primary structure comprises 92 residues: Translation initiation factor IF-1 (92 aa).

The region spanning 1-72 (MAKEELIQFE…EKGRLIFRHK (72 aa)) is the S1-like domain. The tract at residues 69–92 (FRHKDERPGGPPRSGPPRGQFRRR) is disordered.

The protein belongs to the IF-1 family. As to quaternary structure, component of the 30S ribosomal translation pre-initiation complex which assembles on the 30S ribosome in the order IF-2 and IF-3, IF-1 and N-formylmethionyl-tRNA(fMet); mRNA recruitment can occur at any time during PIC assembly.

It localises to the cytoplasm. Functionally, one of the essential components for the initiation of protein synthesis. Stabilizes the binding of IF-2 and IF-3 on the 30S subunit to which N-formylmethionyl-tRNA(fMet) subsequently binds. Helps modulate mRNA selection, yielding the 30S pre-initiation complex (PIC). Upon addition of the 50S ribosomal subunit IF-1, IF-2 and IF-3 are released leaving the mature 70S translation initiation complex. The polypeptide is Translation initiation factor IF-1 (Rhodopseudomonas palustris (strain ATCC BAA-98 / CGA009)).